The primary structure comprises 219 residues: Dynein light chain Tctex-type 4 (219 aa).

Residues 1–84 (MAGRPVPAGR…RRPSLGPVPP (84 aa)) form a disordered region. Residues 10 to 20 (RQEEELAKDPG) show a composition bias toward basic and acidic residues. A Phosphoserine modification is found at serine 64.

It belongs to the dynein light chain Tctex-type family. Interacts with ENG/endoglin, TGFBR2 and TGFBR3. Interacts with PPP1CC.

The protein localises to the cell projection. It is found in the cilium. The protein resides in the flagellum. Its subcellular location is the cytoplasmic vesicle. It localises to the secretory vesicle. The protein localises to the acrosome. It is found in the cytoplasm. The protein resides in the cytoskeleton. Its subcellular location is the cilium axoneme. It localises to the nucleus. The protein localises to the microtubule organizing center. The chain is Dynein light chain Tctex-type 4 (DYNLT4) from Sus scrofa (Pig).